The primary structure comprises 788 residues: Protein translocase subunit SecA 2 (788 aa).

ATP contacts are provided by residues Gln86, 104–108, and Asp493; that span reads GEGKT.

It belongs to the SecA family. As to quaternary structure, monomer and homodimer. Part of the essential Sec protein translocation apparatus which comprises SecA, SecYEG and auxiliary proteins SecDF. Other proteins may also be involved.

It localises to the cell membrane. The protein resides in the cytoplasm. The enzyme catalyses ATP + H2O + cellular proteinSide 1 = ADP + phosphate + cellular proteinSide 2.. Part of the Sec protein translocase complex. Interacts with the SecYEG preprotein conducting channel. Has a central role in coupling the hydrolysis of ATP to the transfer of proteins into and across the cell membrane, serving as an ATP-driven molecular motor driving the stepwise translocation of polypeptide chains across the membrane. This chain is Protein translocase subunit SecA 2, found in Bacillus thuringiensis (strain Al Hakam).